The chain runs to 525 residues: MTENIHKHRILILDFGSQYTQLVARRVRELGVYCELWAWDVTEAQIRDFNPSGIILSGGPESTTEENSPRAPQYVFEAGVPVFGVCYGMQTMAMQLGGHVEGSNEREFGYAQVEVLTDSALVRGIEDSLTADGKPLLDVWMSHGDKVTAIPSDFVTVASTESCPFAIMANEEKRFYGVQFHPEVTHTRQGMRMLERFVRDICQCEALWTPAKIIDDAVARIREQVGDDKVILGLSGGVDSSVTAMLLHRAIGKNLTCVFVDNGLLRLNEAEQVMDMFGDHFGLNIVHVPAEDRFLSALAGENDPEAKRKIIGRVFVEVFDEEALKLEDVKWLAQGTIYPDVIESAASATGKAHVIKSHHNVGGLPKEMKMGLVEPLKELFKDEVRKIGLELGLPYDMLYRHPFPGPGLGVRVLGEVKKEYCDLLRRADAIFIEELRKADLYDKVSQAFTVFLPVRSVGVMGDGRKYDWVVSLRAVETIDFMTAHWAHLPYDFLGRVSNRIINEVNGISRVVYDISGKPPATIEWE.

Residues 9–207 (RILILDFGSQ…VRDICQCEAL (199 aa)) form the Glutamine amidotransferase type-1 domain. The active-site Nucleophile is the C86. Residues H181 and E183 contribute to the active site. The GMPS ATP-PPase domain maps to 208-400 (WTPAKIIDDA…LGLPYDMLYR (193 aa)). Residue 235-241 (SGGVDSS) coordinates ATP.

In terms of assembly, homodimer.

It catalyses the reaction XMP + L-glutamine + ATP + H2O = GMP + L-glutamate + AMP + diphosphate + 2 H(+). It functions in the pathway purine metabolism; GMP biosynthesis; GMP from XMP (L-Gln route): step 1/1. Catalyzes the synthesis of GMP from XMP. The sequence is that of GMP synthase [glutamine-hydrolyzing] from Salmonella typhi.